The following is a 689-amino-acid chain: Glycine--tRNA ligase beta subunit (689 aa).

This sequence belongs to the class-II aminoacyl-tRNA synthetase family. Tetramer of two alpha and two beta subunits.

The protein localises to the cytoplasm. The enzyme catalyses tRNA(Gly) + glycine + ATP = glycyl-tRNA(Gly) + AMP + diphosphate. This is Glycine--tRNA ligase beta subunit from Escherichia coli O139:H28 (strain E24377A / ETEC).